A 214-amino-acid polypeptide reads, in one-letter code: Riboflavin kinase (214 aa).

Residues 1-91 (MRSIMEVETL…YCSIFEDGGA (91 aa)) are H-T-H motif-like. The interval 92–214 (PVMRGKVVTG…DGDEVEVTLE (123 aa)) is riboflavin kinase. Residue 101-106 (GLGEGQ) participates in CDP binding. Residues Thr-130 and Asn-132 each contribute to the Mg(2+) site. FMN-binding residues include Thr-182 and Glu-190. 195-198 (IKLR) lines the CDP pocket.

It belongs to the archaeal riboflavin kinase family. It depends on Mg(2+) as a cofactor.

The catalysed reaction is riboflavin + CTP = CDP + FMN + H(+). It participates in cofactor biosynthesis; FMN biosynthesis; FMN from riboflavin (CTP route): step 1/1. Its function is as follows. Catalyzes the CTP-dependent phosphorylation of riboflavin (vitamin B2) to form flavin mononucleotide (FMN). In Methanocella arvoryzae (strain DSM 22066 / NBRC 105507 / MRE50), this protein is Riboflavin kinase (ribK).